A 115-amino-acid chain; its full sequence is Large ribosomal subunit protein bL19 (115 aa).

This sequence belongs to the bacterial ribosomal protein bL19 family.

Functionally, this protein is located at the 30S-50S ribosomal subunit interface and may play a role in the structure and function of the aminoacyl-tRNA binding site. This chain is Large ribosomal subunit protein bL19, found in Francisella tularensis subsp. mediasiatica (strain FSC147).